Reading from the N-terminus, the 229-residue chain is Potassium/proton antiporter CemA (229 aa).

2 consecutive transmembrane segments (helical) span residues I114–L134 and I189–I209.

It belongs to the CemA family.

The protein resides in the plastid. It is found in the chloroplast inner membrane. It carries out the reaction K(+)(in) + H(+)(out) = K(+)(out) + H(+)(in). In terms of biological role, contributes to K(+)/H(+) antiport activity by supporting proton efflux to control proton extrusion and homeostasis in chloroplasts in a light-dependent manner to modulate photosynthesis. Prevents excessive induction of non-photochemical quenching (NPQ) under continuous-light conditions. Indirectly promotes efficient inorganic carbon uptake into chloroplasts. This is Potassium/proton antiporter CemA from Lotus japonicus (Lotus corniculatus var. japonicus).